The following is a 62-amino-acid chain: uncharacterized protein (62 aa).

2 helical membrane passes run 9 to 29 (HNEL…ALIG) and 42 to 62 (AAVV…LQLL).

It is found in the membrane. This is an uncharacterized protein from Saccharomyces cerevisiae (strain ATCC 204508 / S288c) (Baker's yeast).